Reading from the N-terminus, the 72-residue chain is Translation initiation factor IF-1 (72 aa).

In terms of domain architecture, S1-like spans 1–72 (MAKEDSIEME…SKGRIVYRAR (72 aa)).

This sequence belongs to the IF-1 family. In terms of assembly, component of the 30S ribosomal translation pre-initiation complex which assembles on the 30S ribosome in the order IF-2 and IF-3, IF-1 and N-formylmethionyl-tRNA(fMet); mRNA recruitment can occur at any time during PIC assembly.

It localises to the cytoplasm. Functionally, one of the essential components for the initiation of protein synthesis. Stabilizes the binding of IF-2 and IF-3 on the 30S subunit to which N-formylmethionyl-tRNA(fMet) subsequently binds. Helps modulate mRNA selection, yielding the 30S pre-initiation complex (PIC). Upon addition of the 50S ribosomal subunit IF-1, IF-2 and IF-3 are released leaving the mature 70S translation initiation complex. This Nitrosococcus oceani (strain ATCC 19707 / BCRC 17464 / JCM 30415 / NCIMB 11848 / C-107) protein is Translation initiation factor IF-1.